Reading from the N-terminus, the 678-residue chain is Zinc finger protein 334 (678 aa).

One can recognise a KRAB domain in the interval Val-8 to Glu-79. C2H2-type zinc fingers lie at residues Asn-235–His-257, Tyr-263–His-285, Tyr-291–His-313, Tyr-319–His-341, Tyr-347–His-369, Asn-375–His-397, Tyr-403–His-425, Tyr-431–His-453, Tyr-459–His-481, Tyr-542–His-564, Tyr-570–His-592, Tyr-598–His-620, Tyr-626–His-648, and Tyr-654–His-676.

This sequence belongs to the krueppel C2H2-type zinc-finger protein family.

It is found in the nucleus. May be involved in transcriptional regulation. The sequence is that of Zinc finger protein 334 (ZNF334) from Pongo abelii (Sumatran orangutan).